The primary structure comprises 509 residues: ATP synthase subunit alpha (509 aa).

169 to 176 serves as a coordination point for ATP; sequence GDRQTGKT.

This sequence belongs to the ATPase alpha/beta chains family. In terms of assembly, F-type ATPases have 2 components, CF(1) - the catalytic core - and CF(0) - the membrane proton channel. CF(1) has five subunits: alpha(3), beta(3), gamma(1), delta(1), epsilon(1). CF(0) has three main subunits: a(1), b(2) and c(9-12). The alpha and beta chains form an alternating ring which encloses part of the gamma chain. CF(1) is attached to CF(0) by a central stalk formed by the gamma and epsilon chains, while a peripheral stalk is formed by the delta and b chains.

Its subcellular location is the cell inner membrane. It catalyses the reaction ATP + H2O + 4 H(+)(in) = ADP + phosphate + 5 H(+)(out). Its function is as follows. Produces ATP from ADP in the presence of a proton gradient across the membrane. The alpha chain is a regulatory subunit. In Methylobacterium nodulans (strain LMG 21967 / CNCM I-2342 / ORS 2060), this protein is ATP synthase subunit alpha.